The sequence spans 194 residues: GTP cyclohydrolase 1 (194 aa).

C83, H86, and C155 together coordinate Zn(2+).

Belongs to the GTP cyclohydrolase I family. Toroid-shaped homodecamer, composed of two pentamers of five dimers.

The catalysed reaction is GTP + H2O = 7,8-dihydroneopterin 3'-triphosphate + formate + H(+). It participates in cofactor biosynthesis; 7,8-dihydroneopterin triphosphate biosynthesis; 7,8-dihydroneopterin triphosphate from GTP: step 1/1. This is GTP cyclohydrolase 1 from Streptococcus pyogenes serotype M5 (strain Manfredo).